The chain runs to 515 residues: Fatty acyl-CoA reductase 2 (515 aa).

The Cytoplasmic portion of the chain corresponds to 1–464 (MSMIAAFYSN…KAKQHLRRLR (464 aa)). Residues 465 to 484 (NIHYLFNTALFLIIWRLLIA) traverse the membrane as a helical segment. The Peroxisomal portion of the chain corresponds to 485–515 (RSQMARNVWFFIVSFCYKFISYFRASSTLKV).

It belongs to the fatty acyl-CoA reductase family. As to expression, specifically expressed in the meibomian glands of the eyelid and the sebaceous glands of the skin. Also expressed in the brain where large quantities of ether lipids are synthesized.

The protein localises to the peroxisome membrane. The catalysed reaction is a long-chain fatty acyl-CoA + 2 NADPH + 2 H(+) = a long-chain primary fatty alcohol + 2 NADP(+) + CoA. It catalyses the reaction hexadecanoyl-CoA + 2 NADPH + 2 H(+) = hexadecan-1-ol + 2 NADP(+) + CoA. The enzyme catalyses octadecanoyl-CoA + 2 NADPH + 2 H(+) = octadecan-1-ol + 2 NADP(+) + CoA. It carries out the reaction a very long-chain fatty acyl-CoA + 2 NADPH + 2 H(+) = a very long-chain primary fatty alcohol + 2 NADP(+) + CoA. The catalysed reaction is an ultra-long-chain fatty acyl-CoA + 2 NADPH + 2 H(+) = an ultra long-chain primary fatty alcohol + 2 NADP(+) + CoA. It catalyses the reaction eicosanoyl-CoA + 2 NADPH + 2 H(+) = eicosan-1-ol + 2 NADP(+) + CoA. The enzyme catalyses docosanoyl-CoA + 2 NADPH + 2 H(+) = docosan-1-ol + 2 NADP(+) + CoA. It carries out the reaction tetracosanoyl-CoA + 2 NADPH + 2 H(+) = tetracosan-1-ol + 2 NADP(+) + CoA. The catalysed reaction is hexacosanoyl-CoA + 2 NADPH + 2 H(+) = hexacosan-1-ol + 2 NADP(+) + CoA. It catalyses the reaction octacosanoyl-CoA + 2 NADPH + 2 H(+) = octacosan-1-ol + 2 NADP(+) + CoA. The enzyme catalyses triacontanoyl-CoA + 2 NADPH + 2 H(+) = triacontan-1-ol + 2 NADP(+) + CoA. It carries out the reaction 18-methylnonadecanoyl-CoA + 2 NADPH + 2 H(+) = 18-methylnonadecan-1-ol + 2 NADP(+) + CoA. The catalysed reaction is 20-methylheneicosanoyl-CoA + 2 NADPH + 2 H(+) = 20-methylheneicosan-1-ol + 2 NADP(+) + CoA. It catalyses the reaction 22-methyltricosanoyl-CoA + 2 NADPH + 2 H(+) = 22-methyltricosan-1-ol + 2 NADP(+) + CoA. The enzyme catalyses 24-methylpentacosanoyl-CoA + 2 NADPH + 2 H(+) = 24-methylpentacosan-1-ol + 2 NADP(+) + CoA. In terms of biological role, catalyzes the reduction of saturated but not unsaturated C16 or C18 fatty acyl-CoA to fatty alcohols. A lower activity can be observed with shorter fatty acyl-CoA substrates. Can produce very long-chain and ultra long-chain FAls, regardless of whether they have a straight or branched chain. It may play a role in the production of ether lipids/plasmalogens and wax monoesters which synthesis requires fatty alcohols as substrates. In Mus musculus (Mouse), this protein is Fatty acyl-CoA reductase 2.